Reading from the N-terminus, the 149-residue chain is Transcription antitermination protein NusB (149 aa).

It belongs to the NusB family.

Involved in transcription antitermination. Required for transcription of ribosomal RNA (rRNA) genes. Binds specifically to the boxA antiterminator sequence of the ribosomal RNA (rrn) operons. The chain is Transcription antitermination protein NusB from Acinetobacter baylyi (strain ATCC 33305 / BD413 / ADP1).